Reading from the N-terminus, the 844-residue chain is Protein translocase subunit SecA (844 aa).

Residues glutamine 87, 105–109 (GEGKT), and aspartate 495 contribute to the ATP site. The segment covering 783–800 (QAPPEELKQEFKHKEEPK) has biased composition (basic and acidic residues). Residues 783–844 (QAPPEELKQE…GQKYKKCCGA (62 aa)) form a disordered region. The span at 802 to 811 (LNYSGAQKET) shows a compositional bias: polar residues. Positions 816-826 (PERRGEPKVGR) are enriched in basic and acidic residues. Positions 830, 832, 841, and 842 each coordinate Zn(2+).

It belongs to the SecA family. In terms of assembly, monomer and homodimer. Part of the essential Sec protein translocation apparatus which comprises SecA, SecYEG and auxiliary proteins SecDF-YajC and YidC. Zn(2+) serves as cofactor.

Its subcellular location is the cell inner membrane. It localises to the cytoplasm. It catalyses the reaction ATP + H2O + cellular proteinSide 1 = ADP + phosphate + cellular proteinSide 2.. Part of the Sec protein translocase complex. Interacts with the SecYEG preprotein conducting channel. Has a central role in coupling the hydrolysis of ATP to the transfer of proteins into and across the cell membrane, serving as an ATP-driven molecular motor driving the stepwise translocation of polypeptide chains across the membrane. This is Protein translocase subunit SecA from Nitratidesulfovibrio vulgaris (strain DSM 19637 / Miyazaki F) (Desulfovibrio vulgaris).